A 528-amino-acid chain; its full sequence is Na(+)/H(+) antiporter NhaB (528 aa).

The next 10 helical transmembrane spans lie at 25–47, 66–86, 97–117, 130–164, 241–261, 304–324, 351–371, 390–410, 448–468, and 476–496; these read IISF…GWLL, PGGL…SQVL, LLLV…LFVF, VSLL…FYSI, IRMS…CFLV, AFIG…VGLI, ALPF…IIDL, LVVF…VFVG, ATPN…APLI, and VWMA…AIQL.

It belongs to the NhaB Na(+)/H(+) (TC 2.A.34) antiporter family.

Its subcellular location is the cell inner membrane. The enzyme catalyses 2 Na(+)(in) + 3 H(+)(out) = 2 Na(+)(out) + 3 H(+)(in). Functionally, na(+)/H(+) antiporter that extrudes sodium in exchange for external protons. This chain is Na(+)/H(+) antiporter NhaB, found in Shewanella halifaxensis (strain HAW-EB4).